The sequence spans 436 residues: GTPase Der (436 aa).

2 EngA-type G domains span residues 4–167 (PVVA…KNIP) and 176–351 (VQFC…ENHS). Residues 10 to 17 (GRPNVGKS), 57 to 61 (DTGGI), 119 to 122 (NKLD), 182 to 189 (GRPNVGKS), 229 to 233 (DTAGM), and 294 to 297 (NKWD) contribute to the GTP site. A KH-like domain is found at 352-436 (LRVQTNVLND…PIKIFARARK (85 aa)).

This sequence belongs to the TRAFAC class TrmE-Era-EngA-EngB-Septin-like GTPase superfamily. EngA (Der) GTPase family. As to quaternary structure, associates with the 50S ribosomal subunit.

Functionally, GTPase that plays an essential role in the late steps of ribosome biogenesis. This is GTPase Der from Bacillus velezensis (strain DSM 23117 / BGSC 10A6 / LMG 26770 / FZB42) (Bacillus amyloliquefaciens subsp. plantarum).